We begin with the raw amino-acid sequence, 511 residues long: Kinesin-like protein 8 (511 aa).

Residues 5 to 356 (NVRVIVRVRP…LRYSEAARRI (352 aa)) enclose the Kinesin motor domain. 107–114 (GQKGTGKT) is an ATP binding site. Phosphoserine is present on residues S278, S279, S284, and S456. Residues 373 to 489 (EGELDDILTT…KLVKSQLHDY (117 aa)) are a coiled coil.

This sequence belongs to the TRAFAC class myosin-kinesin ATPase superfamily. Kinesin family.

It localises to the cytoplasm. Its subcellular location is the cytoskeleton. This is Kinesin-like protein 8 (klp8) from Schizosaccharomyces pombe (strain 972 / ATCC 24843) (Fission yeast).